The primary structure comprises 208 residues: FMN-dependent NADH:quinone oxidoreductase 2 (208 aa).

The protein belongs to the azoreductase type 1 family. Homodimer. FMN serves as cofactor.

It carries out the reaction 2 a quinone + NADH + H(+) = 2 a 1,4-benzosemiquinone + NAD(+). The enzyme catalyses N,N-dimethyl-1,4-phenylenediamine + anthranilate + 2 NAD(+) = 2-(4-dimethylaminophenyl)diazenylbenzoate + 2 NADH + 2 H(+). Functionally, quinone reductase that provides resistance to thiol-specific stress caused by electrophilic quinones. Its function is as follows. Also exhibits azoreductase activity. Catalyzes the reductive cleavage of the azo bond in aromatic azo compounds to the corresponding amines. In Bacillus anthracis, this protein is FMN-dependent NADH:quinone oxidoreductase 2.